The following is a 428-amino-acid chain: 3-phosphoshikimate 1-carboxyvinyltransferase (428 aa).

The 3-phosphoshikimate site is built by Lys22, Ser23, and Arg27. Lys22 lines the phosphoenolpyruvate pocket. Phosphoenolpyruvate is bound by residues Gly96 and Arg124. Residues Ser170, Ser171, Gln172, Ser198, Asp314, Asn337, and Lys341 each contribute to the 3-phosphoshikimate site. Gln172 provides a ligand contact to phosphoenolpyruvate. The active-site Proton acceptor is Asp314. Positions 345, 387, and 412 each coordinate phosphoenolpyruvate.

It belongs to the EPSP synthase family. In terms of assembly, monomer.

The protein resides in the cytoplasm. The enzyme catalyses 3-phosphoshikimate + phosphoenolpyruvate = 5-O-(1-carboxyvinyl)-3-phosphoshikimate + phosphate. Its pathway is metabolic intermediate biosynthesis; chorismate biosynthesis; chorismate from D-erythrose 4-phosphate and phosphoenolpyruvate: step 6/7. Functionally, catalyzes the transfer of the enolpyruvyl moiety of phosphoenolpyruvate (PEP) to the 5-hydroxyl of shikimate-3-phosphate (S3P) to produce enolpyruvyl shikimate-3-phosphate and inorganic phosphate. In Shewanella amazonensis (strain ATCC BAA-1098 / SB2B), this protein is 3-phosphoshikimate 1-carboxyvinyltransferase.